A 300-amino-acid polypeptide reads, in one-letter code: MMTYLSKQFSKLLFGQLLFLFIGNLLLKPVQAYPIYAQQAYANPREVTGRIVCANCHLAQKAIELEVPNSVLPNQEFEATVKIDYDLNQKQLLGNGQKGGLNVGAVLILPEGFRLSPNSRSPFFNTYSEQLPNVIVIGPVPGEKYREIHFPLKAPDPTTNKQVHFVKYSIYAGGNRGRGQLYPNGQKSNNAPVLASVNGVIEQIRENEVVIKTDQGDLVSQAIPAGHTLLVKQGQKIQNEQPLTMDPNVGGFGQAEKEIVLQNPTRLKTFIAFCVTVFIGQLAFVLKKKQVERVQASEMN.

The signal sequence occupies residues Met-1 to Ala-32. Heme contacts are provided by Tyr-33, Cys-53, Cys-56, and His-57. Residues Leu-267–Lys-287 form a helical membrane-spanning segment.

It belongs to the cytochrome f family. In terms of assembly, the 4 large subunits of the cytochrome b6-f complex are cytochrome b6, subunit IV (17 kDa polypeptide, petD), cytochrome f and the Rieske protein, while the 4 small subunits are PetG, PetL, PetM and PetN. The complex functions as a dimer. Requires heme as cofactor.

Its subcellular location is the plastid. It is found in the chloroplast thylakoid membrane. Component of the cytochrome b6-f complex, which mediates electron transfer between photosystem II (PSII) and photosystem I (PSI), cyclic electron flow around PSI, and state transitions. The polypeptide is Cytochrome f (Cyanidioschyzon merolae (strain NIES-3377 / 10D) (Unicellular red alga)).